The chain runs to 103 residues: Large ribosomal subunit protein bL21 (103 aa).

The protein belongs to the bacterial ribosomal protein bL21 family. Part of the 50S ribosomal subunit. Contacts protein L20.

In terms of biological role, this protein binds to 23S rRNA in the presence of protein L20. This chain is Large ribosomal subunit protein bL21, found in Heliobacterium modesticaldum (strain ATCC 51547 / Ice1).